Here is a 122-residue protein sequence, read N- to C-terminus: Neutral phospholipase A2 agkistrodotoxin (122 aa).

Cystine bridges form between C26–C115, C28–C44, C43–C95, C49–C122, C50–C88, C57–C81, and C75–C86. 3 residues coordinate Ca(2+): Y27, G29, and G31. The active site involves H47. D48 contacts Ca(2+). D89 is a catalytic residue.

Ca(2+) is required as a cofactor. In terms of tissue distribution, expressed by the venom gland.

It localises to the secreted. The enzyme catalyses a 1,2-diacyl-sn-glycero-3-phosphocholine + H2O = a 1-acyl-sn-glycero-3-phosphocholine + a fatty acid + H(+). Functionally, snake venom phospholipase A2 (PLA2) that inhibits neuromuscular transmission by blocking acetylcholine release from the nerve termini. PLA2 catalyzes the calcium-dependent hydrolysis of the 2-acyl groups in 3-sn-phosphoglycerides. The protein is Neutral phospholipase A2 agkistrodotoxin of Gloydius halys (Chinese water mocassin).